The sequence spans 421 residues: MLDPSLLRSSPETVAAGLARRHFTLDVAALNALDQQRKALQIQLEQLRNARNEASRQIGQARRQGLDTGAMQAAAASNGEEIKTLEQSLERTLAEWDTLTIGLPNIPQDSVPDGRDEADNVVLRHWGSPSTFAFPPRDHVELGEALGIIDFAAGARLAGTRFVVLRGAGARLERALTQFMLDLHTTEHGYTEIAPPFLANADSLYGTGQLPKFEEDLFALRDDPYYLIPTAEVPLTNLLRGEIVASLPQRFCAYTPCFRREAGAYGRDTRGMIRQHQFDKVELVQIVRPEDSAQAHETLTAHAEKVLQLLELPYRVTALCAGDLGFSAAKTYDLEVWLPGQNQYREISSCSNFESFQARRLQLRYRAEDGKPQLVHTLNGSGLAVGRTLVALLENHQQADGRIRIPAALRPYLGGMTVIQA.

L-serine is bound at residue 230–232; the sequence is TAE. Residue 259 to 261 coordinates ATP; the sequence is RRE. Glu282 is a binding site for L-serine. 346–349 contacts ATP; it reads EISS. Position 381 (Ser381) interacts with L-serine.

Belongs to the class-II aminoacyl-tRNA synthetase family. Type-1 seryl-tRNA synthetase subfamily. In terms of assembly, homodimer. The tRNA molecule binds across the dimer.

The protein resides in the cytoplasm. It carries out the reaction tRNA(Ser) + L-serine + ATP = L-seryl-tRNA(Ser) + AMP + diphosphate + H(+). It catalyses the reaction tRNA(Sec) + L-serine + ATP = L-seryl-tRNA(Sec) + AMP + diphosphate + H(+). The protein operates within aminoacyl-tRNA biosynthesis; selenocysteinyl-tRNA(Sec) biosynthesis; L-seryl-tRNA(Sec) from L-serine and tRNA(Sec): step 1/1. Functionally, catalyzes the attachment of serine to tRNA(Ser). Is also able to aminoacylate tRNA(Sec) with serine, to form the misacylated tRNA L-seryl-tRNA(Sec), which will be further converted into selenocysteinyl-tRNA(Sec). This is Serine--tRNA ligase from Acidithiobacillus ferrooxidans (strain ATCC 23270 / DSM 14882 / CIP 104768 / NCIMB 8455) (Ferrobacillus ferrooxidans (strain ATCC 23270)).